An 887-amino-acid chain; its full sequence is 3-hydroxy-3-methylglutaryl-coenzyme A reductase (887 aa).

Topologically, residues 1-9 (MLSRLFRMH) are cytoplasmic. A helical transmembrane segment spans residues 10 to 39 (GLFVASHPWEVIVGTVTLTICMMSMNMFTG). At 40 to 56 (NNKICGWNYECPKFEED) the chain is on the lumenal side. Residues 57-78 (VLSSDIIILTITRCIAILYIYF) traverse the membrane as a helical segment. One can recognise an SSD domain in the interval 61-218 (DIIILTITRC…MTFFPACVSL (158 aa)). Residues 75-78 (YIYF) carry the INSIG-binding motif motif. The Cytoplasmic segment spans residues 79 to 89 (QFQNLRQLGSK). Residue Lys89 forms a Glycyl lysine isopeptide (Lys-Gly) (interchain with G-Cter in ubiquitin) linkage. A helical transmembrane segment spans residues 90–114 (YILGIAGLFTIFSSFVFSTVVIHFL). The Lumenal portion of the chain corresponds to 115–123 (DKELTGLNE). The chain crosses the membrane as a helical span at residues 124–149 (ALPFFLLLIDLSRASALAKFALSSNS). At 150 to 159 (QDEVRENIAR) the chain is on the cytoplasmic side. A helical transmembrane segment spans residues 160-187 (GMAILGPTFTLDALVECLVIGVGTMSGV). Residues 188–191 (RQLE) lie on the Lumenal side of the membrane. The helical transmembrane segment at 192–220 (IMCCFGCMSVLANYFVFMTFFPACVSLVL) threads the bilayer. Over 221-248 (ELSRESREGRPIWQLSHFARVLEEEENK) the chain is Cytoplasmic. Lys248 participates in a covalent cross-link: Glycyl lysine isopeptide (Lys-Gly) (interchain with G-Cter in ubiquitin). A helical membrane pass occupies residues 249–275 (PNPVTQRVKMIMSLGLVLVHAHSRWIA). At 276–314 (DPSPQNSTTEHSKVSLGLDEDVSKRIEPSVSLWQFYLSK) the chain is on the lumenal side. An N-linked (GlcNAc...) asparagine glycan is attached at Asn281. Residues 315-339 (MISMDIEQVVTLSLAFLLAVKYIFF) form a helical membrane-spanning segment. Residues 340–887 (EQAETESTLS…LQGTCTKKSA (548 aa)) are Cytoplasmic-facing. Active-site charge relay system residues include Glu558, Lys690, and Asp766. The Proton donor role is filled by His865. Ser871 is modified (phosphoserine; by AMPK).

The protein belongs to the HMG-CoA reductase family. Homotetramer. Homodimer. Interacts (via its SSD) with INSIG1; the interaction, accelerated by sterols, leads to the recruitment of HMGCR to AMFR/gp78 for its ubiquitination by the sterol-mediated ERAD pathway. Interacts with UBIAD1. N-glycosylated. Glycosylated with high mannose chains including Man(6)(GlcNAc)(2), Man(7)(GlcNAc)(2) and Man(8)(GlcNAc)(2). Deglycosylated by NGLY1 on release from the endoplasmic reticulum (ER) in a sterol-mediated manner. In terms of processing, undergoes sterol-mediated ubiquitination and ER-associated degradation (ERAD). Accumulation of sterols in the endoplasmic reticulum (ER) membrane, triggers binding of the reductase to the ER membrane protein INSIG1 or INSIG2. The INSIG1 binding leads to the recruitment of the ubiquitin ligase, AMFR/gp78, RNF139 or RNF145, initiating ubiquitination of the reductase. The ubiquitinated reductase is then extracted from the ER membrane and delivered to cytosolic 26S proteosomes by a mechanism probably mediated by the ATPase Valosin-containing protein VCP/p97. The INSIG2-binding leads to the recruitment of the ubiquitin ligase RNF139, initiating ubiquitination of the reductase. Lys-248 is the main site of ubiquitination. Ubiquitination is enhanced by the presence of a geranylgeranylated protein. Post-translationally, phosphorylated. Phosphorylation at Ser-871 reduces the catalytic activity.

It localises to the endoplasmic reticulum membrane. Its subcellular location is the peroxisome membrane. The enzyme catalyses (R)-mevalonate + 2 NADP(+) + CoA = (3S)-3-hydroxy-3-methylglutaryl-CoA + 2 NADPH + 2 H(+). It participates in metabolic intermediate biosynthesis; (R)-mevalonate biosynthesis; (R)-mevalonate from acetyl-CoA: step 3/3. With respect to regulation, regulated by a negative feedback mechanism through sterols and non-sterol metabolites derived from mevalonate. Phosphorylation at Ser-871 down-regulates the catalytic activity. Its function is as follows. Catalyzes the conversion of (3S)-hydroxy-3-methylglutaryl-CoA (HMG-CoA) to mevalonic acid, the rate-limiting step in the synthesis of cholesterol and other isoprenoids, thus plays a critical role in cellular cholesterol homeostasis. The protein is 3-hydroxy-3-methylglutaryl-coenzyme A reductase (HMGCR) of Cricetulus griseus (Chinese hamster).